Here is a 671-residue protein sequence, read N- to C-terminus: tRNA(Met) cytidine acetyltransferase TmcA (671 aa).

ATP contacts are provided by residues Gln180, Gly202–Gln211, and Arg319. The N-acetyltransferase domain maps to Gln356–Leu531. Residues Ile461 to Val463, Gln468 to Arg474, Glu499, and Arg506 each bind acetyl-CoA.

This sequence belongs to the RNA cytidine acetyltransferase family. TmcA subfamily.

It is found in the cytoplasm. The catalysed reaction is cytidine(34) in elongator tRNA(Met) + acetyl-CoA + ATP + H2O = N(4)-acetylcytidine(34) in elongator tRNA(Met) + ADP + phosphate + CoA + H(+). Functionally, catalyzes the formation of N(4)-acetylcytidine (ac(4)C) at the wobble position of tRNA(Met), by using acetyl-CoA as an acetyl donor and ATP (or GTP). This chain is tRNA(Met) cytidine acetyltransferase TmcA, found in Shigella flexneri serotype 5b (strain 8401).